The primary structure comprises 368 residues: Alanine racemase (368 aa).

K40 serves as the catalytic Proton acceptor; specific for D-alanine. K40 carries the N6-(pyridoxal phosphate)lysine modification. R134 contributes to the substrate binding site. Y263 (proton acceptor; specific for L-alanine) is an active-site residue. Residue M310 coordinates substrate.

It belongs to the alanine racemase family. It depends on pyridoxal 5'-phosphate as a cofactor.

The catalysed reaction is L-alanine = D-alanine. The protein operates within amino-acid biosynthesis; D-alanine biosynthesis; D-alanine from L-alanine: step 1/1. Catalyzes the interconversion of L-alanine and D-alanine. May also act on other amino acids. In Listeria monocytogenes serovar 1/2a (strain ATCC BAA-679 / EGD-e), this protein is Alanine racemase (alr).